The following is a 957-amino-acid chain: MTQTLSQLENRGAFIERHIGPDAAQQQEMLNAVGAESLNALTGQIVPKDIQLATPPQVGEAATEYAALAELKAIAGRNKRFTSYIGMGYTAVQLPPVILRNMLENPGWYTAYTPYQPEVSQGRLEALLNFQQVTLDLTGLDMASASLLDEATAAAEAMAMAKRVSKLKNANRFFVASDVHPQTLDVVRTRAETFGFDVIVDDAAKALDHQDVFGVLLQQVGSTGEIHDYSALISELKARKVIVSVAADFMALVLLTAPGKQGADIVFGSAQRFGVPMGYGGPHAAFFAAKDEFKRSMPGRIIGVSKDAAGNTALRMAMQTREQHIRREKANSNICTSQVLLANIASLYAVYHGPVGLKRIANRIHRLTDILAAGLQQKGLKLRHAHYFDTLCVEVADKAAVLARAEAAEINLRSDIHNAVGITLDETTTRENVAQLFNVLLGGSHGLNIETLDKDVALDSRSIQQSMLRDDAILTHPVFNRYHSETEMMRYMHSLERKDLALNQAMIPLGSCTMKLNAAAEMIPITWPEFAELHPFCPPEQAEGYHQMISQLSDWLVKLTGYDAVCMQPNSGAQGEYAGLLAIRHYHESRNEGHRDICLIPASAHGTNPASAHMAGMQVVVVACDKNGNIDLDDLRAKAEQHAANLSCIMVTYPSTHGVYEETIREVCEVVHQFGGQVYLDGANMNAQVGITSPGFIGADVSHLNLHKTFCIPHGGGGPGMGPIGVKAHLAPFVPGHSVVQIEGMLTRQGAVSAAPFGSASILPISWMYIRMMGAEGLKQASQVAILNANYIASRLKDAYPVLYTGRDGRVAHECILDIRPLKEETGISELDIAKRLIDYGFHAPTMSFPVAGTLMVEPTESEGKAELDRFIDAMLAIRAEIDQVKAGVWPLEDNPLVNAPHIQSELVAEWAHPYSREVAVFPAGVADKYWPTVKRLDDVYGDRNLFCSCVPISDYQ.

Lys708 carries the N6-(pyridoxal phosphate)lysine modification.

This sequence belongs to the GcvP family. The glycine cleavage system is composed of four proteins: P, T, L and H. It depends on pyridoxal 5'-phosphate as a cofactor.

The enzyme catalyses N(6)-[(R)-lipoyl]-L-lysyl-[glycine-cleavage complex H protein] + glycine + H(+) = N(6)-[(R)-S(8)-aminomethyldihydrolipoyl]-L-lysyl-[glycine-cleavage complex H protein] + CO2. The glycine cleavage system catalyzes the degradation of glycine. The P protein binds the alpha-amino group of glycine through its pyridoxal phosphate cofactor; CO(2) is released and the remaining methylamine moiety is then transferred to the lipoamide cofactor of the H protein. The chain is Glycine dehydrogenase (decarboxylating) from Salmonella dublin (strain CT_02021853).